A 341-amino-acid chain; its full sequence is MTDIVYDKDADLSLIQGRKVAVIGYGSQGHAHALNLRDSGVEVVIGLKEGSTSRAKAEEQGFTVKTPSDASAWADVIVILAPDQHQRGLYADSVRDNLTEGKTLVFAHGFNIRFGYIEAPEGVDVVLVAPKGPGHTVRREFEAGRGVPVIVAVEVDASGKAWDLAWSYAKGIGGLRAGGIRTTFTEETETDLFGEQAVLCGGTSQLVQYGFETLMEAGYQPQIAYFEVLHELKLIVDLMWEGGIAKQRWSISDTAEYGDYVSGPRVISPDVKENMKAVLADIQSGAFADRFIKDQDAGAPEFLELRKKGEEHPIESTGRELRKLFAWNKADDDYTDGSVAR.

The 181-residue stretch at 2 to 182 (TDIVYDKDAD…GGLRAGGIRT (181 aa)) folds into the KARI N-terminal Rossmann domain. NADP(+) contacts are provided by residues 25-28 (YGSQ), K48, S51, S53, and 83-86 (DQHQ). H108 is a catalytic residue. G134 is an NADP(+) binding site. The region spanning 183–328 (TFTEETETDL…RELRKLFAWN (146 aa)) is the KARI C-terminal knotted domain. Mg(2+) is bound by residues D191, E195, E227, and E231. Residue S252 participates in substrate binding.

This sequence belongs to the ketol-acid reductoisomerase family. Mg(2+) serves as cofactor.

It catalyses the reaction (2R)-2,3-dihydroxy-3-methylbutanoate + NADP(+) = (2S)-2-acetolactate + NADPH + H(+). The enzyme catalyses (2R,3R)-2,3-dihydroxy-3-methylpentanoate + NADP(+) = (S)-2-ethyl-2-hydroxy-3-oxobutanoate + NADPH + H(+). It participates in amino-acid biosynthesis; L-isoleucine biosynthesis; L-isoleucine from 2-oxobutanoate: step 2/4. Its pathway is amino-acid biosynthesis; L-valine biosynthesis; L-valine from pyruvate: step 2/4. Involved in the biosynthesis of branched-chain amino acids (BCAA). Catalyzes an alkyl-migration followed by a ketol-acid reduction of (S)-2-acetolactate (S2AL) to yield (R)-2,3-dihydroxy-isovalerate. In the isomerase reaction, S2AL is rearranged via a Mg-dependent methyl migration to produce 3-hydroxy-3-methyl-2-ketobutyrate (HMKB). In the reductase reaction, this 2-ketoacid undergoes a metal-dependent reduction by NADPH to yield (R)-2,3-dihydroxy-isovalerate. The polypeptide is Ketol-acid reductoisomerase (NADP(+)) (Clavibacter michiganensis subsp. michiganensis (strain NCPPB 382)).